The chain runs to 318 residues: Ribose-phosphate pyrophosphokinase 2 (318 aa).

96-101 (RQDKKD) is a binding site for ATP. The Mg(2+) site is built by Asp128, His130, Asp139, and Asp143. ATP is bound at residue His130. A binding of phosphoribosylpyrophosphate region spans residues 212–227 (KDRVAILVDDMADTCG).

It belongs to the ribose-phosphate pyrophosphokinase family. Homodimer. The active form is probably a hexamer composed of 3 homodimers. The cofactor is Mg(2+).

The catalysed reaction is D-ribose 5-phosphate + ATP = 5-phospho-alpha-D-ribose 1-diphosphate + AMP + H(+). The protein operates within metabolic intermediate biosynthesis; 5-phospho-alpha-D-ribose 1-diphosphate biosynthesis; 5-phospho-alpha-D-ribose 1-diphosphate from D-ribose 5-phosphate (route I): step 1/1. With respect to regulation, activated by magnesium and inorganic phosphate. Competitively or non-competitively inhibited by ADP, 2,3-bisphosphoglyceride or GDP. Catalyzes the synthesis of phosphoribosylpyrophosphate (PRPP) that is essential for nucleotide synthesis. The sequence is that of Ribose-phosphate pyrophosphokinase 2 (PRPS2) from Homo sapiens (Human).